Reading from the N-terminus, the 1590-residue chain is Pentafunctional AROM polypeptide (1590 aa).

The interval 1 to 400 (MSTANGSSPT…HEPKASSVDD (400 aa)) is 3-dehydroquinate synthase. Residues 49–51 (DTN), 96–99 (EGSK), 127–129 (GGV), and Asp-132 each bind NAD(+). Arg-143 serves as a coordination point for 7-phospho-2-dehydro-3-deoxy-D-arabino-heptonate. Residue 152-153 (TT) participates in NAD(+) binding. 7-phospho-2-dehydro-3-deoxy-D-arabino-heptonate is bound by residues Asp-159 and Lys-165. Residue Lys-174 coordinates NAD(+). Residue Asn-175 coordinates 7-phospho-2-dehydro-3-deoxy-D-arabino-heptonate. NAD(+) is bound by residues 192-195 (FLNT) and Asn-203. Zn(2+) is bound at residue Glu-207. 7-phospho-2-dehydro-3-deoxy-D-arabino-heptonate-binding positions include 207-210 (EVIK) and Lys-266. Glu-276 (proton acceptor; for 3-dehydroquinate synthase activity) is an active-site residue. 7-phospho-2-dehydro-3-deoxy-D-arabino-heptonate-binding positions include 280 to 284 (RNLLN) and His-287. His-287 contacts Zn(2+). His-291 serves as the catalytic Proton acceptor; for 3-dehydroquinate synthase activity. Positions 303 and 372 each coordinate 7-phospho-2-dehydro-3-deoxy-D-arabino-heptonate. His-303 is a Zn(2+) binding site. The interval 413-856 (VQPGVRPGLK…WDVLSGVFGV (444 aa)) is EPSP synthase. Cys-838 acts as the For EPSP synthase activity in catalysis. The segment at 876–1070 (NRSVFVIGMR…KAKPHSFFVS (195 aa)) is shikimate kinase. 883-890 (GMRGAGKS) is an ATP binding site. The 3-dehydroquinase stretch occupies residues 1071-1285 (LTVPNITAHT…AAPGQLTAAE (215 aa)). Catalysis depends on His-1187, which acts as the Proton acceptor; for 3-dehydroquinate dehydratase activity. The active-site Schiff-base intermediate with substrate; for 3-dehydroquinate dehydratase activity is the Lys-1215. Residues 1298 to 1590 (KRKFYLFGKP…IVMNGTSDSS (293 aa)) form a shikimate dehydrogenase region.

It in the N-terminal section; belongs to the sugar phosphate cyclases superfamily. Dehydroquinate synthase family. In the 2nd section; belongs to the EPSP synthase family. The protein in the 3rd section; belongs to the shikimate kinase family. This sequence in the 4th section; belongs to the type-I 3-dehydroquinase family. It in the C-terminal section; belongs to the shikimate dehydrogenase family. In terms of assembly, homodimer. The cofactor is Zn(2+).

The protein resides in the cytoplasm. The enzyme catalyses 7-phospho-2-dehydro-3-deoxy-D-arabino-heptonate = 3-dehydroquinate + phosphate. It catalyses the reaction 3-dehydroquinate = 3-dehydroshikimate + H2O. The catalysed reaction is shikimate + NADP(+) = 3-dehydroshikimate + NADPH + H(+). It carries out the reaction shikimate + ATP = 3-phosphoshikimate + ADP + H(+). The enzyme catalyses 3-phosphoshikimate + phosphoenolpyruvate = 5-O-(1-carboxyvinyl)-3-phosphoshikimate + phosphate. It participates in metabolic intermediate biosynthesis; chorismate biosynthesis; chorismate from D-erythrose 4-phosphate and phosphoenolpyruvate: step 2/7. The protein operates within metabolic intermediate biosynthesis; chorismate biosynthesis; chorismate from D-erythrose 4-phosphate and phosphoenolpyruvate: step 3/7. Its pathway is metabolic intermediate biosynthesis; chorismate biosynthesis; chorismate from D-erythrose 4-phosphate and phosphoenolpyruvate: step 4/7. It functions in the pathway metabolic intermediate biosynthesis; chorismate biosynthesis; chorismate from D-erythrose 4-phosphate and phosphoenolpyruvate: step 5/7. It participates in metabolic intermediate biosynthesis; chorismate biosynthesis; chorismate from D-erythrose 4-phosphate and phosphoenolpyruvate: step 6/7. Its function is as follows. The AROM polypeptide catalyzes 5 consecutive enzymatic reactions in prechorismate polyaromatic amino acid biosynthesis. The polypeptide is Pentafunctional AROM polypeptide (Pyricularia oryzae (strain 70-15 / ATCC MYA-4617 / FGSC 8958) (Rice blast fungus)).